A 197-amino-acid polypeptide reads, in one-letter code: 5'-deoxynucleotidase plu3092 (197 aa).

Substrate is bound by residues 16–17 and His-31; that span reads RW. One can recognise an HD domain in the interval 28–140; the sequence is VSEHSLQVAF…IKQADSLCAY (113 aa). A divalent metal cation contacts are provided by His-31, His-66, and Asp-67. Residues Asp-67, 75–78, and Asp-135 each bind substrate; that span reads DLPT. Residue Asp-135 coordinates a divalent metal cation.

The protein belongs to the 5DNU family. As to quaternary structure, homodimer. A divalent metal cation serves as cofactor.

It is found in the cytoplasm. The enzyme catalyses a 2'-deoxyribonucleoside 5'-phosphate + H2O = a 2'-deoxyribonucleoside + phosphate. Catalyzes the strictly specific dephosphorylation of 2'-deoxyribonucleoside 5'-monophosphates. This chain is 5'-deoxynucleotidase plu3092, found in Photorhabdus laumondii subsp. laumondii (strain DSM 15139 / CIP 105565 / TT01) (Photorhabdus luminescens subsp. laumondii).